Reading from the N-terminus, the 695-residue chain is Elongation factor G (695 aa).

The region spanning 4 to 279 (EKVRNIGISA…AVTQYLPSPL (276 aa)) is the tr-type G domain. GTP contacts are provided by residues 13–20 (AHIDSGKT), 79–83 (DTPGH), and 133–136 (NKMD).

It belongs to the TRAFAC class translation factor GTPase superfamily. Classic translation factor GTPase family. EF-G/EF-2 subfamily.

The protein resides in the cytoplasm. In terms of biological role, catalyzes the GTP-dependent ribosomal translocation step during translation elongation. During this step, the ribosome changes from the pre-translocational (PRE) to the post-translocational (POST) state as the newly formed A-site-bound peptidyl-tRNA and P-site-bound deacylated tRNA move to the P and E sites, respectively. Catalyzes the coordinated movement of the two tRNA molecules, the mRNA and conformational changes in the ribosome. This chain is Elongation factor G, found in Rhodopirellula baltica (strain DSM 10527 / NCIMB 13988 / SH1).